The primary structure comprises 390 residues: Neuromedin-B receptor (390 aa).

Over 1 to 44 the chain is Extracellular; the sequence is MPPKSLSNLSQTAGVNQSGFFPGASERDFLPATDRTTAEFVIRC. Residues Asn-8 and Asn-16 are each glycosylated (N-linked (GlcNAc...) asparagine). The helical transmembrane segment at 45-65 threads the bilayer; it reads VIPSLYLLIITVGLLGNIVLV. Residues 66-76 are Cytoplasmic-facing; the sequence is KIFLTNSAMRS. The chain crosses the membrane as a helical span at residues 77 to 97; it reads VPNIFISNLAAGDVLLLLTCV. Topologically, residues 98-117 are extracellular; sequence PVDASRYFLDEWMFGKVGCK. Cys-116 and Cys-198 are disulfide-bonded. Residues 118–138 traverse the membrane as a helical segment; it reads LIPVIQLTSVGVSVFTLTALS. Topologically, residues 139–155 are cytoplasmic; it reads ADRYRAIVNPMDIQTSG. Residues 156–176 traverse the membrane as a helical segment; that stretch reads AVLWTCVKAGGIWVVSVLLAV. At 177–210 the chain is on the extracellular side; the sequence is PEAVFSEVARIDGLDNGSFTACIPYPQTDELHPK. N-linked (GlcNAc...) asparagine glycosylation occurs at Asn-192. Residues 211–231 traverse the membrane as a helical segment; the sequence is IHSVLIFLVYFLIPLGIISVY. The Cytoplasmic segment spans residues 232–266; it reads YYHIAKTLIKSAHNLPGEYNEHTKKQMETRKRLAK. Residues 267–287 traverse the membrane as a helical segment; it reads IVLVFVGCFVFCWFPNHILYM. Residues 288–305 are Extracellular-facing; it reads YRSFNYNEIDPSLGHMIV. The chain crosses the membrane as a helical span at residues 306–328; that stretch reads TLVARVLSFCNSCVNPFALYLLS. Residues 329-390 are Cytoplasmic-facing; sequence ESFRKHFNNQ…GHSVKQEMAL (62 aa). Cys-341 carries the S-palmitoyl cysteine lipid modification. At Ser-352 the chain carries Phosphoserine.

The protein belongs to the G-protein coupled receptor 1 family. In terms of tissue distribution, highly expressed in peripheral tissues where it is detected in the respiratory system, circulatory system, digestive system, urogenital system, lymphatic organs and endocrine system (at protein level). In the testis, expressed mainly in Leydig cells (at protein level).

The protein localises to the cell membrane. Its function is as follows. Receptor for neuromedin-B. Contributes to the maintenance of basal sigh rate through signaling in the pre-Botzinger complex, a cluster of several thousand neurons in the ventrolateral medulla responsible for inspiration during respiratory activity. Contributes to the induction of sneezing following exposure to chemical irritants or allergens which causes release of NMB by nasal sensory neurons and activation of NMBR-expressing neurons in the sneeze-evoking region of the brainstem. These in turn activate neurons of the caudal ventral respiratory group, giving rise to the sneezing response. Contributes to induction of acute itch, possibly through its activation on dorsal root ganglion neurons by the NMB peptide. Plays a role in the innate immune response to influenza A virus infection by enhancing interferon alpha expression and reducing expression of IL6. Plays a role in CSF1-induced proliferation of osteoclast precursors by contributing to the positive regulation of the expression of the CSF1 receptor CSF1R. The sequence is that of Neuromedin-B receptor (NMBR) from Sus scrofa (Pig).